A 954-amino-acid polypeptide reads, in one-letter code: Protein translocase subunit SecA (954 aa).

Residues Gln86, Gly104 to Thr108, and Asp494 contribute to the ATP site. A disordered region spans residues Leu520–Lys549.

This sequence belongs to the SecA family. As to quaternary structure, monomer and homodimer. Part of the essential Sec protein translocation apparatus which comprises SecA, SecYEG and auxiliary proteins SecDF. Other proteins may also be involved.

Its subcellular location is the cell inner membrane. The protein resides in the cellular thylakoid membrane. The protein localises to the cytoplasm. The catalysed reaction is ATP + H2O + cellular proteinSide 1 = ADP + phosphate + cellular proteinSide 2.. Functionally, part of the Sec protein translocase complex. Interacts with the SecYEG preprotein conducting channel. Has a central role in coupling the hydrolysis of ATP to the transfer of proteins into and across the cell membrane, serving as an ATP-driven molecular motor driving the stepwise translocation of polypeptide chains across the membrane. In terms of biological role, probably participates in protein translocation into and across both the cytoplasmic and thylakoid membranes in cyanobacterial cells. The protein is Protein translocase subunit SecA of Synechococcus sp. (strain JA-3-3Ab) (Cyanobacteria bacterium Yellowstone A-Prime).